The chain runs to 189 residues: GTP cyclohydrolase 1 (189 aa).

Residues cysteine 79, histidine 82, and cysteine 150 each coordinate Zn(2+).

The protein belongs to the GTP cyclohydrolase I family. Homomer.

It catalyses the reaction GTP + H2O = 7,8-dihydroneopterin 3'-triphosphate + formate + H(+). It participates in cofactor biosynthesis; 7,8-dihydroneopterin triphosphate biosynthesis; 7,8-dihydroneopterin triphosphate from GTP: step 1/1. The chain is GTP cyclohydrolase 1 from Rickettsia rickettsii (strain Iowa).